The chain runs to 168 residues: Quinol oxidase subunit 2 (168 aa).

Residues 9-31 (EVWFIVMLVLVLIFFSWNVYYLS) form a helical membrane-spanning segment.

This sequence belongs to the cytochrome c oxidase subunit 2 family.

The protein localises to the cell membrane. It catalyses the reaction 2 a quinol + O2 = 2 a quinone + 2 H2O. Functionally, the terminal oxidase is the component of the respiratory chain that catalyzes the reduction of oxygen to water. Subunits 1-3 form the functional core of the enzyme complex. Subunit 2 transfers the electrons from caldariella quinol to the bimetallic center of the catalytic subunit 1 that is formed by heme A3 and Cu(B). The sequence is that of Quinol oxidase subunit 2 (soxA) from Sulfolobus acidocaldarius (strain ATCC 33909 / DSM 639 / JCM 8929 / NBRC 15157 / NCIMB 11770).